A 539-amino-acid polypeptide reads, in one-letter code: CTP synthase (539 aa).

The amidoligase domain stretch occupies residues Met-1–Ile-267. Residue Ser-13 coordinates CTP. Residue Ser-13 participates in UTP binding. Residue Ser-14 to Ile-19 coordinates ATP. L-glutamine is bound at residue Tyr-54. Asp-71 contributes to the ATP binding site. Positions 71 and 141 each coordinate Mg(2+). CTP-binding positions include Asp-148–Glu-150, Lys-188–Gln-193, and Lys-224. Residues Lys-188 to Gln-193 and Lys-224 each bind UTP. Residues Lys-294–Gln-537 form the Glutamine amidotransferase type-1 domain. Position 356 (Gly-356) interacts with L-glutamine. Cys-383 (nucleophile; for glutamine hydrolysis) is an active-site residue. L-glutamine-binding positions include Leu-384–Gln-387, Glu-407, and Arg-465. Catalysis depends on residues His-510 and Glu-512.

This sequence belongs to the CTP synthase family. As to quaternary structure, homotetramer.

It carries out the reaction UTP + L-glutamine + ATP + H2O = CTP + L-glutamate + ADP + phosphate + 2 H(+). The enzyme catalyses L-glutamine + H2O = L-glutamate + NH4(+). The catalysed reaction is UTP + NH4(+) + ATP = CTP + ADP + phosphate + 2 H(+). The protein operates within pyrimidine metabolism; CTP biosynthesis via de novo pathway; CTP from UDP: step 2/2. With respect to regulation, allosterically activated by GTP, when glutamine is the substrate; GTP has no effect on the reaction when ammonia is the substrate. The allosteric effector GTP functions by stabilizing the protein conformation that binds the tetrahedral intermediate(s) formed during glutamine hydrolysis. Inhibited by the product CTP, via allosteric rather than competitive inhibition. In terms of biological role, catalyzes the ATP-dependent amination of UTP to CTP with either L-glutamine or ammonia as the source of nitrogen. Regulates intracellular CTP levels through interactions with the four ribonucleotide triphosphates. This chain is CTP synthase, found in Lactobacillus helveticus (strain DPC 4571).